A 286-amino-acid chain; its full sequence is Undecaprenyl-diphosphatase (286 aa).

Helical transmembrane passes span 43–63, 91–111, 118–138, 150–170, 189–209, 236–256, and 264–284; these read FWKMFSIVIQLGAILCLPIYF, LTIIAFLCTAIPAFLFTKIIG, IIMGSALLIGGIVMWIVDVMF, MSVGQAIWIGLCQVLSAVFPG, AAALEFSFFLSIPTMVVATCY, ITLAIGFIVSFIVAYFVVAWF, and GFVPFAVYRIVVGIAVLAWAL.

The protein belongs to the UppP family.

The protein resides in the cell inner membrane. The enzyme catalyses di-trans,octa-cis-undecaprenyl diphosphate + H2O = di-trans,octa-cis-undecaprenyl phosphate + phosphate + H(+). Catalyzes the dephosphorylation of undecaprenyl diphosphate (UPP). Confers resistance to bacitracin. The protein is Undecaprenyl-diphosphatase of Koribacter versatilis (strain Ellin345).